The primary structure comprises 506 residues: UPF0371 protein FN1121 (506 aa).

It belongs to the UPF0371 family.

This Fusobacterium nucleatum subsp. nucleatum (strain ATCC 25586 / DSM 15643 / BCRC 10681 / CIP 101130 / JCM 8532 / KCTC 2640 / LMG 13131 / VPI 4355) protein is UPF0371 protein FN1121.